A 340-amino-acid polypeptide reads, in one-letter code: DNA-directed RNA polymerase subunit alpha (340 aa).

The alpha N-terminal domain (alpha-NTD) stretch occupies residues 1-236 (MLSLSKNWNT…EQLQLFISFE (236 aa)). An alpha C-terminal domain (alpha-CTD) region spans residues 251 to 340 (FSPYLLKRVD…LSKRYEDSYN (90 aa)).

It belongs to the RNA polymerase alpha chain family. As to quaternary structure, homodimer. The RNAP catalytic core consists of 2 alpha, 1 beta, 1 beta' and 1 omega subunit. When a sigma factor is associated with the core the holoenzyme is formed, which can initiate transcription.

The catalysed reaction is RNA(n) + a ribonucleoside 5'-triphosphate = RNA(n+1) + diphosphate. DNA-dependent RNA polymerase catalyzes the transcription of DNA into RNA using the four ribonucleoside triphosphates as substrates. In Rickettsia rickettsii (strain Iowa), this protein is DNA-directed RNA polymerase subunit alpha.